The primary structure comprises 214 residues: Octanoyltransferase (214 aa).

A BPL/LPL catalytic domain is found at 34–214; it reads GLQKELVWLL…KFNEIFSSFN (181 aa). Substrate-binding positions include 73 to 80, 145 to 147, and 158 to 160; these read RGGKYTYH, AFG, and GVS. The Acyl-thioester intermediate role is filled by Cys-176.

This sequence belongs to the LipB family.

The protein localises to the cytoplasm. The enzyme catalyses octanoyl-[ACP] + L-lysyl-[protein] = N(6)-octanoyl-L-lysyl-[protein] + holo-[ACP] + H(+). It functions in the pathway protein modification; protein lipoylation via endogenous pathway; protein N(6)-(lipoyl)lysine from octanoyl-[acyl-carrier-protein]: step 1/2. In terms of biological role, catalyzes the transfer of endogenously produced octanoic acid from octanoyl-acyl-carrier-protein onto the lipoyl domains of lipoate-dependent enzymes. Lipoyl-ACP can also act as a substrate although octanoyl-ACP is likely to be the physiological substrate. The chain is Octanoyltransferase from Ehrlichia canis (strain Jake).